A 283-amino-acid chain; its full sequence is Pantothenate synthetase (283 aa).

30-37 lines the ATP pocket; that stretch reads MGNLHAGH. The active-site Proton donor is H37. Q61 is a binding site for (R)-pantoate. Q61 contributes to the beta-alanine binding site. Residue 149–152 coordinates ATP; that stretch reads GQKD. Q155 is a (R)-pantoate binding site. ATP contacts are provided by residues V178 and 186 to 189; that span reads LSSR.

This sequence belongs to the pantothenate synthetase family. As to quaternary structure, homodimer.

The protein resides in the cytoplasm. It carries out the reaction (R)-pantoate + beta-alanine + ATP = (R)-pantothenate + AMP + diphosphate + H(+). It participates in cofactor biosynthesis; (R)-pantothenate biosynthesis; (R)-pantothenate from (R)-pantoate and beta-alanine: step 1/1. Catalyzes the condensation of pantoate with beta-alanine in an ATP-dependent reaction via a pantoyl-adenylate intermediate. This Hydrogenovibrio crunogenus (strain DSM 25203 / XCL-2) (Thiomicrospira crunogena) protein is Pantothenate synthetase.